The sequence spans 165 residues: Ubiquitin-fold modifier-conjugating enzyme 1 (165 aa).

The active-site Glycyl thioester intermediate is Cys116.

The protein belongs to the ubiquitin-conjugating enzyme family. UFC1 subfamily.

Its function is as follows. E2-like enzyme which forms an intermediate with UFM1 via a thioester linkage. This is Ubiquitin-fold modifier-conjugating enzyme 1 from Drosophila virilis (Fruit fly).